The sequence spans 397 residues: Enoyl-[acyl-carrier-protein] reductase [NADH] (397 aa).

NAD(+) is bound by residues 48-53 (GASTGY), 74-75 (FE), 111-112 (DA), and 139-140 (VA). Tyr225 provides a ligand contact to substrate. The Proton donor role is filled by Tyr235. NAD(+) contacts are provided by residues Lys244 and 273 to 275 (VVT).

Belongs to the TER reductase family. Monomer.

The enzyme catalyses a 2,3-saturated acyl-[ACP] + NAD(+) = a (2E)-enoyl-[ACP] + NADH + H(+). Its pathway is lipid metabolism; fatty acid biosynthesis. Functionally, involved in the final reduction of the elongation cycle of fatty acid synthesis (FAS II). Catalyzes the reduction of a carbon-carbon double bond in an enoyl moiety that is covalently linked to an acyl carrier protein (ACP). The polypeptide is Enoyl-[acyl-carrier-protein] reductase [NADH] (Burkholderia pseudomallei (strain 1106a)).